Consider the following 130-residue polypeptide: Small ribosomal subunit protein uS8 (130 aa).

The protein belongs to the universal ribosomal protein uS8 family. As to quaternary structure, part of the 30S ribosomal subunit. Contacts proteins S5 and S12.

Its function is as follows. One of the primary rRNA binding proteins, it binds directly to 16S rRNA central domain where it helps coordinate assembly of the platform of the 30S subunit. This Actinobacillus succinogenes (strain ATCC 55618 / DSM 22257 / CCUG 43843 / 130Z) protein is Small ribosomal subunit protein uS8.